Consider the following 387-residue polypeptide: Leucine aminopeptidase 1 (387 aa).

The signal sequence occupies residues 1 to 18 (MKFTNLSLLALSASLASA). The propeptide occupies 19 to 86 (RFVEQHETDQ…LGTLRTSSVK (68 aa)). N-linked (GlcNAc...) asparagine glycosylation is present at N179. Positions 187, 206, 245, and 272 each coordinate Zn(2+). C321 and C325 form a disulfide bridge. Residue H354 coordinates Zn(2+).

The protein belongs to the peptidase M28 family. M28E subfamily. As to quaternary structure, monomer. Zn(2+) is required as a cofactor.

The protein resides in the secreted. In terms of biological role, extracellular aminopeptidase that allows assimilation of proteinaceous substrates. In Sclerotinia sclerotiorum (strain ATCC 18683 / 1980 / Ss-1) (White mold), this protein is Leucine aminopeptidase 1 (lap1).